The following is a 317-amino-acid chain: 4-diphosphocytidyl-2-C-methyl-D-erythritol kinase (317 aa).

Lys17 is an active-site residue. Position 109–119 (109–119 (PVAGGMGGGSA)) interacts with ATP. Residue Asp151 is part of the active site.

It belongs to the GHMP kinase family. IspE subfamily.

It carries out the reaction 4-CDP-2-C-methyl-D-erythritol + ATP = 4-CDP-2-C-methyl-D-erythritol 2-phosphate + ADP + H(+). Its pathway is isoprenoid biosynthesis; isopentenyl diphosphate biosynthesis via DXP pathway; isopentenyl diphosphate from 1-deoxy-D-xylulose 5-phosphate: step 3/6. In terms of biological role, catalyzes the phosphorylation of the position 2 hydroxy group of 4-diphosphocytidyl-2C-methyl-D-erythritol. This chain is 4-diphosphocytidyl-2-C-methyl-D-erythritol kinase, found in Paenarthrobacter aurescens (strain TC1).